The following is a 331-amino-acid chain: ADP-L-glycero-D-manno-heptose-6-epimerase (331 aa).

NADP(+) contacts are provided by residues 11-12 (FI), 32-33 (DN), Lys-39, Lys-54, 75-79 (EGACS), and Asn-92. Tyr-139 functions as the Proton acceptor in the catalytic mechanism. Lys-143 serves as a coordination point for NADP(+). A substrate-binding site is contributed by Asn-168. Residues Val-169 and Lys-177 each contribute to the NADP(+) site. The active-site Proton acceptor is Lys-177. Residues Arg-179, His-186, 200–203 (FGEY), Arg-213, and Tyr-292 each bind substrate.

It belongs to the NAD(P)-dependent epimerase/dehydratase family. HldD subfamily. As to quaternary structure, homopentamer. NADP(+) is required as a cofactor.

The catalysed reaction is ADP-D-glycero-beta-D-manno-heptose = ADP-L-glycero-beta-D-manno-heptose. It functions in the pathway nucleotide-sugar biosynthesis; ADP-L-glycero-beta-D-manno-heptose biosynthesis; ADP-L-glycero-beta-D-manno-heptose from D-glycero-beta-D-manno-heptose 7-phosphate: step 4/4. In terms of biological role, catalyzes the interconversion between ADP-D-glycero-beta-D-manno-heptose and ADP-L-glycero-beta-D-manno-heptose via an epimerization at carbon 6 of the heptose. This chain is ADP-L-glycero-D-manno-heptose-6-epimerase, found in Cupriavidus necator (strain ATCC 17699 / DSM 428 / KCTC 22496 / NCIMB 10442 / H16 / Stanier 337) (Ralstonia eutropha).